The following is a 572-amino-acid chain: Na(+)/citrate cotransporter (572 aa).

The next 8 helical transmembrane spans lie at 13-33 (SFVI…LVPD), 53-73 (VIPV…LKVL), 80-100 (VQYM…ATAV), 124-144 (LMLG…NTAT), 218-238 (AASI…VLLG), 255-275 (SWFA…WLWL), 315-335 (PLSY…ILWF), and 357-377 (HVTD…VPSQ). N-linked (GlcNAc...) asparagine glycosylation occurs at asparagine 382. 4 helical membrane-spanning segments follow: residues 410–430 (VPWG…GCET), 443–463 (PLSS…VAMT), 491–511 (PLYV…LPVA), and 532–552 (TGLV…NTWG). An N-linked (GlcNAc...) asparagine glycan is attached at asparagine 566.

The protein belongs to the SLC13A/DASS transporter (TC 2.A.47) family. NADC subfamily. In terms of assembly, homodimer. Expressed in liver, testis and brain.

It localises to the cell membrane. It catalyses the reaction citrate(out) + 4 Na(+)(out) = citrate(in) + 4 Na(+)(in). Inhibited by Li(+). High-affinity sodium/citrate cotransporter that mediates citrate entry into cells, which is a critical participant of biochemical pathways. May function in various metabolic processes in which citrate has a critical role such as energy production (Krebs cycle), fatty acid synthesis, cholesterol synthesis, glycolysis, and gluconeogenesis. Transports citrate into the cell in a Na(+)-dependent manner, recognizing the trivalent form of citrate (physiological pH) rather than the divalent form. Can recognize succinate as a substrate, but its affinity for succinate is several fold lower than for citrate. The stoichiometry is probably 4 Na(+) for each carboxylate, irrespective of whether the translocated substrate is divalent or trivalent, rendering the process electrogenic. Involved in the regulation of citrate levels in the brain. In Rattus norvegicus (Rat), this protein is Na(+)/citrate cotransporter (Slc13a5).